A 319-amino-acid polypeptide reads, in one-letter code: Cell surface A33 antigen (319 aa).

Positions 1 to 21 are cleaved as a signal peptide; that stretch reads MLGKAGSVVWMLCAIWVAADA. The 113-residue stretch at 22-134 folds into the Ig-like V-type domain; sequence LTVETTQDIL…QDVNAKSRVR (113 aa). At 22–235 the chain is on the extracellular side; the sequence is LTVETTQDIL…VAPRPPSMNI (214 aa). 3 cysteine pairs are disulfide-bonded: cysteine 43–cysteine 117, cysteine 146–cysteine 222, and cysteine 162–cysteine 211. N-linked (GlcNAc...) asparagine glycans are attached at residues asparagine 99, asparagine 112, asparagine 200, and asparagine 223. Residues 140–227 form the Ig-like C2-type domain; that stretch reads PPSKPDCSIQ…GIESCNITVA (88 aa). A helical membrane pass occupies residues 236 to 256; the sequence is ALYAGIAGGVFVALIIIGVIV. Over 257 to 319 the chain is Cytoplasmic; the sequence is YCCCCREKDD…GRSTPDQPFQ (63 aa). 2 stretches are compositionally biased toward basic and acidic residues: residues 267–276 and 284–308; these read KDQDREDARP and PKKEQKEISRGREDEDDHRHEDRWS. Residues 267–319 form a disordered region; that stretch reads KDQDREDARPNRAAYQVPKKEQKEISRGREDEDDHRHEDRWSSGRSTPDQPFQ. Polar residues predominate over residues 309 to 319; that stretch reads SGRSTPDQPFQ.

Palmitoylated.

It is found in the membrane. In terms of biological role, may play a role in cell-cell recognition and signaling. This chain is Cell surface A33 antigen (Gpa33), found in Mus musculus (Mouse).